Reading from the N-terminus, the 303-residue chain is HTH-type transcriptional regulator LinR (303 aa).

Residues 6–63 (LDFRHLVLLDALLKRHSVSAAARELDLPQPTASHGLARLRKALGDPLLVRARDGMEPT) enclose the HTH lysR-type domain. Positions 23-42 (VSAAARELDLPQPTASHGLA) form a DNA-binding region, H-T-H motif.

Belongs to the LysR transcriptional regulatory family.

Positively regulates the transcription of the linD and linE genes that are involved in gamma-hexachlorocyclohexane (gamma-HCH or lindane) degradation. This degradation pathway allows S.japonicum UT26 to grow on gamma-HCH as the sole source of carbon and energy. The sequence is that of HTH-type transcriptional regulator LinR (linR) from Sphingobium indicum (strain DSM 16413 / CCM 7287 / MTCC 6362 / UT26 / NBRC 101211 / UT26S) (Sphingobium japonicum).